A 1499-amino-acid chain; its full sequence is Tyrosine-protein phosphatase non-receptor type 23 (1499 aa).

The BRO1 domain maps to 1–219 (LNVNLMLGQA…AKIEDKNEVL (219 aa)). 2 TPR repeats span residues 75–108 (AVAH…LNEA) and 199–232 (EEKA…DPDT). Coiled coils occupy residues 278–305 (EASL…LGQA), 377–464 (KAVL…NVQY), and 506–537 (YADL…LLDR). Disordered stretches follow at residues 536-583 (DREL…MMAG) and 718-1006 (HMAL…LLQP). The his stretch occupies residues 598–993 (HFSPGPFPGS…SSSPESQHGG (396 aa)). The span at 724–752 (GPAPAPPQPCFPVPQPVPQSVPQPQPLPT) shows a compositional bias: pro residues. A compositionally biased stretch (polar residues) spans 754–763 (YTYSIGTKQH). Arginine 785 carries the omega-N-methylarginine modification. Composition is skewed to pro residues over residues 785 to 827 (RIGP…PQPQ), 856 to 866 (LTPPPPYPFTP), 900 to 909 (FPSPGPPHPH), and 934 to 972 (GPPP…PPPC). A run of 20 repeats spans residues 788–789 (PQ), 790–791 (PP), 792–793 (PQ), 794–795 (LQ), 796–797 (PQ), 798–799 (PQ), 800–801 (PQ), 802–803 (PQ), 804–805 (PQ), 806–807 (PP), 808–809 (PQ), 810–811 (PQ), 812–813 (PQ), 814–815 (PQ), 816–817 (PQ), 818–819 (PQ), 820–821 (PQ), 822–823 (PQ), 824–825 (PQ), and 826–827 (PQ). Residues 788-827 (PQPPPQLQPQPQPQPQPQPPPQPQPQPQPQPQPQPQPQPQ) form a 20 X 2 AA approximate tandem repeats of P-Q region. Residues serine 985 and serine 986 each carry the phosphoserine modification. Threonine 994 carries the phosphothreonine modification. The region spanning 1055–1315 (DAVWRELQEA…KFCHEALVRH (261 aa)) is the Tyrosine-protein phosphatase domain. The active-site Phosphocysteine intermediate is cysteine 1255. Disordered regions lie at residues 1322 to 1351 (RHGV…QDLV) and 1381 to 1499 (ASLP…LNKT). Residues 1335–1348 (MSVSQKSHLPQDSQ) show a composition bias toward polar residues. A compositionally biased stretch (pro residues) spans 1390–1419 (PGLPPASLPEPTPAPPSSPPPPSSPLPEPP). The segment covering 1427-1450 (VPEAPSLGPPSSSLELLASLTPEA) has biased composition (low complexity). Over residues 1464-1473 (SKQNFLQAHN) the composition is skewed to polar residues. Arginine 1478 bears the Omega-N-methylarginine mark. Over residues 1482–1499 (PTDDPLSLLDPLWTLNKT) the composition is skewed to low complexity.

It belongs to the protein-tyrosine phosphatase family. Non-receptor class subfamily. In terms of assembly, interacts with GRAP2 and GRB2. Interacts with UBAP1 and CHMP4B. As to expression, ubiquitously expressed, with highest levels in brain, testis and kidney, and lowest levels in skeletal muscle.

Its subcellular location is the nucleus. The protein localises to the cytoplasm. The protein resides in the cytoplasmic vesicle. It is found in the endosome. It localises to the cytoskeleton. Its subcellular location is the cilium basal body. The enzyme catalyses O-phospho-L-tyrosyl-[protein] + H2O = L-tyrosyl-[protein] + phosphate. Its function is as follows. Plays a role in sorting of endocytic ubiquitinated cargos into multivesicular bodies (MVBs) via its interaction with the ESCRT-I complex (endosomal sorting complex required for transport I), and possibly also other ESCRT complexes. May act as a negative regulator of Ras-mediated mitogenic activity. Plays a role in ciliogenesis. This is Tyrosine-protein phosphatase non-receptor type 23 (Ptpn23) from Rattus norvegicus (Rat).